A 549-amino-acid polypeptide reads, in one-letter code: MFS-type transporter TwmF (549 aa).

4 helical membrane passes run 29 to 49 (IVIG…VLTI), 63 to 83 (NFIW…PLFG), 99 to 119 (VAIF…AMLI), and 126 to 146 (GVGS…LVPL). Residue asparagine 151 is glycosylated (N-linked (GlcNAc...) asparagine). The next 10 helical transmembrane spans lie at 155 to 175 (ILMS…GAIV), 182 to 202 (WVFY…FIFL), 221 to 241 (LVGN…LSYA), 249 to 269 (SWHT…FAGL), 291 to 311 (IILA…LFFL), 328 to 348 (VALL…AIAL), 355 to 375 (KPVH…FTLF), 390 to 410 (IVAF…QAFI), 421 to 441 (AWYF…AAIF), and 502 to 522 (VSIA…DVGL).

This sequence belongs to the major facilitator superfamily.

The protein localises to the membrane. In terms of biological role, MFS efflux transporter; part of the gene cluster that mediates the biosynthesis of wortmanamides A and B, reduced long-chain polyketides amidated with a specific omega-amino acid, 5-aminopentanoic acid (5PA). The polypeptide is MFS-type transporter TwmF (Talaromyces wortmannii (Penicillium wortmannii)).